The chain runs to 326 residues: 3-dehydrosphinganine reductase TSC10A (326 aa).

Residues 1–7 (MAAISPL) are Lumenal-facing. A helical transmembrane segment spans residues 8-28 (FLLFLIPIIPLSLLAILALIV). Residues 29–264 (RPRPIKIPIK…KAMDGIKAGN (236 aa)) lie on the Cytoplasmic side of the membrane. Residues G46, S48, S49, G50, R71, K75, and D97 each contribute to the NADPH site. The short motif at 46–50 (GGSSG) is the GXSXG element. The active-site Proton donor is the S174. Y188 (proton acceptor) is an active-site residue. The NADP(+) site is built by Y188 and K192. K192 acts as the Lowers pKa of active site Tyr in catalysis. The chain crosses the membrane as a helical span at residues 265–285 (FTVSCNFEGFLLSLATTGMSP). The Lumenal portion of the chain corresponds to 286 to 288 (QRS). The helical transmembrane segment at 289–309 (FWLAFLEVITAGPIRLIALFF) threads the bilayer. The Cytoplasmic segment spans residues 310 to 326 (QWDWYKAIEKWSKTKTK).

Belongs to the short-chain dehydrogenases/reductases (SDR) family. Expressed in roots, leaves, stems, flowers and siliques.

Its subcellular location is the endoplasmic reticulum membrane. The enzyme catalyses sphinganine + NADP(+) = 3-oxosphinganine + NADPH + H(+). Its pathway is lipid metabolism; sphingolipid metabolism. Catalyzes the reduction of 3'-oxosphinganine (3-ketodihydrosphingosine/KDS) to sphinganine (dihydrosphingosine/DHS), the second step of de novo sphingolipid biosynthesis. In plants, sphingolipids seems to play a critical role in mineral ion homeostasis, most likely through their involvement in the ion transport functionalities of membrane systems in the root. Lacks stereospecificity and can also produce L-threo-DHS in addition to D-erythro-DHS. In Arabidopsis thaliana (Mouse-ear cress), this protein is 3-dehydrosphinganine reductase TSC10A (TSC10A).